The chain runs to 346 residues: Histidinol-phosphate aminotransferase (346 aa).

Position 209 is an N6-(pyridoxal phosphate)lysine (Lys209).

This sequence belongs to the class-II pyridoxal-phosphate-dependent aminotransferase family. Histidinol-phosphate aminotransferase subfamily. In terms of assembly, homodimer. Pyridoxal 5'-phosphate serves as cofactor.

The catalysed reaction is L-histidinol phosphate + 2-oxoglutarate = 3-(imidazol-4-yl)-2-oxopropyl phosphate + L-glutamate. Its pathway is amino-acid biosynthesis; L-histidine biosynthesis; L-histidine from 5-phospho-alpha-D-ribose 1-diphosphate: step 7/9. This Aliivibrio fischeri (strain MJ11) (Vibrio fischeri) protein is Histidinol-phosphate aminotransferase.